Consider the following 258-residue polypeptide: Cell division protein FtsQ (258 aa).

The Cytoplasmic segment spans residues 1–29; the sequence is MAKNAPAPRGARRKPVKKVGVPLRERVAT. A helical transmembrane segment spans residues 30–50; it reads AVPWMLVGSVAMVSLLAVIYL. At 51 to 258 the chain is on the periplasmic side; it reads PAALDGYPIR…MAVTWREQQS (208 aa). In terms of domain architecture, POTRA spans 57–127; sequence YPIRKVGVDG…DTVVLTVEER (71 aa).

It belongs to the FtsQ/DivIB family. FtsQ subfamily. In terms of assembly, part of a complex composed of FtsB, FtsL and FtsQ.

The protein localises to the cell inner membrane. Functionally, essential cell division protein. May link together the upstream cell division proteins, which are predominantly cytoplasmic, with the downstream cell division proteins, which are predominantly periplasmic. May control correct divisome assembly. In Alcanivorax borkumensis (strain ATCC 700651 / DSM 11573 / NCIMB 13689 / SK2), this protein is Cell division protein FtsQ.